The primary structure comprises 834 residues: Periplasmic nitrate reductase (834 aa).

The tat-type signal signal peptide spans 1 to 29 (MKLSRREFAKANAAAIAAAAAGLPLASTA). The 57-residue stretch at 41-97 (LDWNKAPCRFCGTGCSVMVATRDNRVVATHGDVKAEVNRGLNCVKGYFLSKIMYGVD) folds into the 4Fe-4S Mo/W bis-MGD-type domain. 4 residues coordinate [4Fe-4S] cluster: cysteine 48, cysteine 51, cysteine 55, and cysteine 83. Mo-bis(molybdopterin guanine dinucleotide) is bound by residues lysine 85, glutamine 152, asparagine 177, cysteine 181, 214–221 (WGSNMAEM), 245–249 (STFEH), 264–266 (QTD), methionine 375, glutamine 379, asparagine 485, 511–512 (SD), lysine 534, aspartate 561, and 721–730 (TGRVLEHWHT). Phenylalanine 797 contributes to the substrate binding site. Residues asparagine 805 and lysine 822 each coordinate Mo-bis(molybdopterin guanine dinucleotide).

It belongs to the prokaryotic molybdopterin-containing oxidoreductase family. NasA/NapA/NarB subfamily. As to quaternary structure, component of the periplasmic nitrate reductase NapAB complex composed of NapA and NapB. Requires [4Fe-4S] cluster as cofactor. It depends on Mo-bis(molybdopterin guanine dinucleotide) as a cofactor. Predicted to be exported by the Tat system. The position of the signal peptide cleavage has not been experimentally proven.

The protein resides in the periplasm. The enzyme catalyses 2 Fe(II)-[cytochrome] + nitrate + 2 H(+) = 2 Fe(III)-[cytochrome] + nitrite + H2O. Functionally, catalytic subunit of the periplasmic nitrate reductase complex NapAB. Receives electrons from NapB and catalyzes the reduction of nitrate to nitrite. The protein is Periplasmic nitrate reductase of Ectopseudomonas mendocina (strain ymp) (Pseudomonas mendocina).